Here is a 468-residue protein sequence, read N- to C-terminus: 3-isopropylmalate dehydratase large subunit (468 aa).

Cysteine 346, cysteine 406, and cysteine 409 together coordinate [4Fe-4S] cluster.

The protein belongs to the aconitase/IPM isomerase family. LeuC type 1 subfamily. As to quaternary structure, heterodimer of LeuC and LeuD. It depends on [4Fe-4S] cluster as a cofactor.

It carries out the reaction (2R,3S)-3-isopropylmalate = (2S)-2-isopropylmalate. Its pathway is amino-acid biosynthesis; L-leucine biosynthesis; L-leucine from 3-methyl-2-oxobutanoate: step 2/4. Catalyzes the isomerization between 2-isopropylmalate and 3-isopropylmalate, via the formation of 2-isopropylmaleate. This is 3-isopropylmalate dehydratase large subunit from Pseudoalteromonas atlantica (strain T6c / ATCC BAA-1087).